Here is a 419-residue protein sequence, read N- to C-terminus: Probable pectate lyase C (419 aa).

Residues 1–19 (MRLTPSLISCLSLLHFTSA) form the signal peptide. Residues asparagine 48, asparagine 164, and asparagine 201 are each glycosylated (N-linked (GlcNAc...) asparagine). The active site involves arginine 204. Positions 261 to 296 (NENFHAYVETNYYDSDKDGTLNGSELGVDSTNYGGM) constitute an EF-hand domain. Ca(2+) is bound by residues aspartate 274, aspartate 276, aspartate 278, and threonine 280. Asparagine 282 is a glycosylation site (N-linked (GlcNAc...) asparagine). Glutamate 285 serves as a coordination point for Ca(2+). The interval 352-395 (ISDEADMGGAGDLDQGTTPTDTDGDGIPDDAEAELGTDPNTADS) is disordered. Residues 363–372 (DLDQGTTPTD) are compositionally biased toward low complexity. The segment covering 373–386 (TDGDGIPDDAEAEL) has biased composition (acidic residues).

This sequence belongs to the polysaccharide lyase 1 family. Ca(2+) serves as cofactor.

It localises to the secreted. It carries out the reaction Eliminative cleavage of (1-&gt;4)-alpha-D-galacturonan to give oligosaccharides with 4-deoxy-alpha-D-galact-4-enuronosyl groups at their non-reducing ends.. Its function is as follows. Pectinolytic enzyme consist of four classes of enzymes: pectin lyase, polygalacturonase, pectin methylesterase and rhamnogalacturonase. Among pectinolytic enzymes, pectin lyase is the most important in depolymerization of pectin, since it cleaves internal glycosidic bonds of highly methylated pectins. Favors pectate, the anion, over pectin, the methyl ester. This is Probable pectate lyase C (plyC) from Aspergillus oryzae (strain ATCC 42149 / RIB 40) (Yellow koji mold).